The primary structure comprises 1235 residues: DNA polymerase (1235 aa).

Positions 773–887 (LLGYYISSGD…LILLLNSIGV (115 aa)) constitute a DOD-type homing endonuclease domain.

Belongs to the DNA polymerase type-B family. This protein undergoes a protein self splicing that involves a post-translational excision of the intervening region (intein) followed by peptide ligation.

It carries out the reaction DNA(n) + a 2'-deoxyribonucleoside 5'-triphosphate = DNA(n+1) + diphosphate. In Pyrococcus horikoshii (strain ATCC 700860 / DSM 12428 / JCM 9974 / NBRC 100139 / OT-3), this protein is DNA polymerase (pol).